The chain runs to 869 residues: DNA mismatch repair protein MutS (869 aa).

624 to 631 is an ATP binding site; sequence GPNMGGKS.

This sequence belongs to the DNA mismatch repair MutS family.

Functionally, this protein is involved in the repair of mismatches in DNA. It is possible that it carries out the mismatch recognition step. This protein has a weak ATPase activity. The sequence is that of DNA mismatch repair protein MutS from Solibacter usitatus (strain Ellin6076).